A 1397-amino-acid chain; its full sequence is ABC transporter B family member 2 (1397 aa).

Positions 1–117 (MSDKSNDGGE…KLDEGEKKEG (117 aa)) are disordered. The span at 24 to 39 (IDDENNNDINNQDDNE) shows a compositional bias: acidic residues. Positions 37–69 (DNENNNNNNNNKNSDDNEENLKDYKNKKEDFGN) form a coiled coil. 2 stretches are compositionally biased toward basic and acidic residues: residues 49–79 (NSDDNEENLKDYKNKKEDFGNIKMDTIDDRP) and 107–117 (KKLDEGEKKEG). 5 helical membrane-spanning segments follow: residues 137 to 157 (ILLMIIGTIGALANGVSMPAI), 191 to 211 (FIYIGCGVFVCSYVEVAFWML), 273 to 293 (FICGFIVGFVNGWQLTLVIFA), 369 to 389 (GIGIGLVFLVLFGTYSLSFWY), and 407 to 427 (WQGGDVLTVFFSVIMGAMALG). The ABC transmembrane type-1 1 domain occupies 140 to 438 (MIIGTIGALA…ASPNVASFAN (299 aa)). The 237-residue stretch at 474–710 (IEYRNIGFSY…NGVYTQLVNR (237 aa)) folds into the ABC transporter 1 domain. 509–516 (GDSGGGKS) is a binding site for ATP. Disordered stretches follow at residues 710–744 (RQQKGGDDGDKKKKKKSKESSKDESNNNIGPSSIS) and 763–783 (GLVNDNDNKKKKKKEKKPQEK). A compositionally biased stretch (low complexity) spans 735-744 (NNNIGPSSIS). Transmembrane regions (helical) follow at residues 801-821 (FLIGLVGATLNGAIMPVFSII), 846-866 (LWFILLAVVAALANFIQIYCF), 922-942 (LGLLIQNIVTIVAGLVIAFVS), 948-968 (LVVLACVPVIGFAGKVEMDFF), 1028-1048 (GLSFGFSQCTLFFIYTLTYWY), and 1101-1121 (VFFAIIMSAMGVGQSMAFMPD). One can recognise an ABC transmembrane type-1 2 domain in the interval 801–1124 (FLIGLVGATL…SMAFMPDLGK (324 aa)). The ABC transporter 2 domain occupies 1159–1395 (IEFKDIKFSY…NGFYAELVSR (237 aa)). 1194 to 1201 (GNSGGGKS) serves as a coordination point for ATP.

Belongs to the ABC transporter superfamily. ABCB family. Multidrug resistance exporter (TC 3.A.1.201) subfamily.

The protein localises to the membrane. In Dictyostelium discoideum (Social amoeba), this protein is ABC transporter B family member 2 (abcB2).